The sequence spans 474 residues: MIASVVTRFAPSPTGFLHIGGARTALFNWLYARKHGGKMLLRIEDTDRARSTTAAIEAILDGLKWLGIDWDDDVVYQFSRVARHRDIAEQLLAEGKAYRCYATPEELAEMREKARAEGRAKLYDGRWRDRDPSEAPPDLKPTIRLKAPLSGETVIEDQVQGRVVWQNENLDDLVLLRGDGTPTYMLAVVVDDHDMGVTHIIRGDDHLINAARQKQIYDTLGWALPTMAHIPLIHGPDGSKLSKRHGALGVDAYRAMGYLPAALRNYLVRLGWSHGDQEIFSTQEMIDAFDLSAIGRSAARFDFAKLENLNGHYIRNCDDHVLVDLFQDALDYVPRGADLKPKLNDATRAQLLRAMPGLKERAKTLIELIDSARFIFADRPLTLDAKAIPLLTSETRALIGRLRTTLETVTSWSAQTTEAAMRTFAEQNNLKLGAIAQPLRIALTGRTTSPGIFDVLAVLGKETCLARLDDQSSP.

Positions 11 to 21 (PSPTGFLHIGG) match the 'HIGH' region motif. A 'KMSKS' region motif is present at residues 240–244 (KLSKR). ATP is bound at residue Lys-243.

It belongs to the class-I aminoacyl-tRNA synthetase family. Glutamate--tRNA ligase type 1 subfamily. Monomer.

The protein resides in the cytoplasm. It catalyses the reaction tRNA(Glu) + L-glutamate + ATP = L-glutamyl-tRNA(Glu) + AMP + diphosphate. Functionally, catalyzes the attachment of glutamate to tRNA(Glu) in a two-step reaction: glutamate is first activated by ATP to form Glu-AMP and then transferred to the acceptor end of tRNA(Glu). The polypeptide is Glutamate--tRNA ligase (Nitrobacter hamburgensis (strain DSM 10229 / NCIMB 13809 / X14)).